We begin with the raw amino-acid sequence, 618 residues long: Matrix metalloproteinase-24 (618 aa).

Positions 1–41 are cleaved as a signal peptide; that stretch reads MPRSRGGRAAPGQAARWSGWRAPGRLLPLLPALCCLAAAAG. Positions 42–128 are excised as a propeptide; sequence AGKPAGADAP…HLSRRRRNKR (87 aa). Over 42 to 575 the chain is Extracellular; sequence AGKPAGADAP…IDDVPGSVNA (534 aa). Positions 110 to 117 match the Cysteine switch motif; sequence PRCGVPDH. C112 and H255 together coordinate Zn(2+). The active site involves E256. The Zn(2+) site is built by H259 and H265. The interval 296–352 is disordered; the sequence is QKIYGPPAEPLEPTRPLPTLPVRRIHSPSERKHERQPRPPRPPLGDRPSTPGAKPNI. Residues 302–314 are compositionally biased toward pro residues; it reads PAEPLEPTRPLPT. Residues 322-332 show a composition bias toward basic and acidic residues; that stretch reads SPSERKHERQP. 4 Hemopexin repeats span residues 350–398, 399–444, 446–494, and 495–542; these read PNIC…WKGL, PARI…GSCL, REGI…KGIP, and QAPQ…WMGC. C353 and C542 are oxidised to a cystine. The chain crosses the membrane as a helical span at residues 576 to 596; the sequence is VAVVVPCTLSLCLLVLLYTIF. The Cytoplasmic segment spans residues 597 to 618; that stretch reads QFKNKTGPQPVTYYKRPVQEWV. The short motif at 616–618 is the PDZ-binding element; it reads EWV.

The protein belongs to the peptidase M10A family. In terms of assembly, interacts (via PDZ-binding motif) with APBA3 (via PDZ domain). Interacts with GRIP1 and GRIP2. It depends on Zn(2+) as a cofactor. Requires Ca(2+) as cofactor. In terms of processing, cleaved by a furin endopeptidase in the trans-Golgi network. As to expression, predominantly expressed in the nervous system: while enriched in the central nervous system, expression is also detected in the peripheral nervous system, including the trigeminal ganglion. Expression is not restricted to the nervous system: it is also enriched in the thymus, with a lower level of expression present in the aorta. In brain, high expression is present in the brain parenchyma, particularly within the neocortex.

Its subcellular location is the cell membrane. The protein resides in the golgi apparatus. It is found in the trans-Golgi network membrane. The protein localises to the secreted. It localises to the extracellular space. Its subcellular location is the extracellular matrix. Metalloprotease that mediates cleavage of N-cadherin (CDH2) and acts as a regulator of neuro-immune interactions and neural stem cell quiescence. Involved in cell-cell interactions between nociceptive neurites and mast cells, possibly by mediating cleavage of CDH2, thereby acting as a mediator of peripheral thermal nociception and inflammatory hyperalgesia. Key regulator of neural stem cells quiescence by mediating cleavage of CDH2, affecting CDH2-mediated anchorage of neural stem cells to ependymocytes in the adult subependymal zone, leading to modulate their quiescence. May play a role in axonal growth. Able to activate progelatinase A. May also be a proteoglycanase involved in degradation of proteoglycans, such as dermatan sulfate and chondroitin sulfate proteoglycans. Cleaves partially fibronectin, but not collagen type I, nor laminin. The protein is Matrix metalloproteinase-24 (Mmp24) of Rattus norvegicus (Rat).